We begin with the raw amino-acid sequence, 352 residues long: Homoserine O-acetyltransferase (352 aa).

Residues Asn-37–Ile-330 enclose the AB hydrolase-1 domain. Ser-133 (nucleophile) is an active-site residue. Arg-206 contacts substrate. Residues Asp-296 and His-325 contribute to the active site. Asp-326 contributes to the substrate binding site.

It belongs to the AB hydrolase superfamily. MetX family. As to quaternary structure, homodimer.

Its subcellular location is the cytoplasm. It catalyses the reaction L-homoserine + acetyl-CoA = O-acetyl-L-homoserine + CoA. It participates in amino-acid biosynthesis; L-methionine biosynthesis via de novo pathway; O-acetyl-L-homoserine from L-homoserine: step 1/1. Its function is as follows. Transfers an acetyl group from acetyl-CoA to L-homoserine, forming acetyl-L-homoserine. The chain is Homoserine O-acetyltransferase from Salinibacter ruber (strain DSM 13855 / M31).